Here is a 34-residue protein sequence, read N- to C-terminus: Delta-conotoxin AtVIA (34 aa).

Positions 1-4 (LSKK) are excised as a propeptide. Q5 is subject to Pyrrolidone carboxylic acid. Cystine bridges form between C6–C23, C13–C27, and C22–C31.

Expressed by the venom duct.

The protein resides in the secreted. Functionally, probable toxin from a worm-hunter cone snail. Shows an excitatory activity on a majority of mouse lumbar dorsal root ganglion (DRG) neurons. Very probably inhibits the inactivation of voltage-gated sodium channels (Nav). The polypeptide is Delta-conotoxin AtVIA (Conus ateralbus (Cone snail)).